Reading from the N-terminus, the 234-residue chain is MSLLYEGKAKRVFTTNIDGQLRVEYKDEVTAGNGAKKDTMIGKGKLNNQITSIIFDYLTHNHIDNHFIKQLSQTEQLVQQVDIIPLEVVVRNIATGSITKRLGFKKGHTFEEPLVEFFYKKDELNDPLITDDHVKLLGIANDEEIKQLKQMAKDINQVLIQLMNEMSLRLVDFKVEFGKTNGGKILLADEISPDTCRIWDKNTDTNFDKDVYRNNTGSLIETYQTFLNKLEDLK.

Belongs to the SAICAR synthetase family.

The catalysed reaction is 5-amino-1-(5-phospho-D-ribosyl)imidazole-4-carboxylate + L-aspartate + ATP = (2S)-2-[5-amino-1-(5-phospho-beta-D-ribosyl)imidazole-4-carboxamido]succinate + ADP + phosphate + 2 H(+). Its pathway is purine metabolism; IMP biosynthesis via de novo pathway; 5-amino-1-(5-phospho-D-ribosyl)imidazole-4-carboxamide from 5-amino-1-(5-phospho-D-ribosyl)imidazole-4-carboxylate: step 1/2. This Staphylococcus epidermidis (strain ATCC 35984 / DSM 28319 / BCRC 17069 / CCUG 31568 / BM 3577 / RP62A) protein is Phosphoribosylaminoimidazole-succinocarboxamide synthase.